Here is a 245-residue protein sequence, read N- to C-terminus: Extracellular protein ARB_04177 (245 aa).

Its subcellular location is the secreted. The polypeptide is Extracellular protein ARB_04177 (Arthroderma benhamiae (strain ATCC MYA-4681 / CBS 112371) (Trichophyton mentagrophytes)).